A 153-amino-acid polypeptide reads, in one-letter code: Arachidonate 5-lipoxygenase-activating protein (153 aa).

At methionine 1–asparagine 8 the chain is on the lumenal side. Residues isoleucine 9 to valine 30 form a helical membrane-spanning segment. The Cytoplasmic portion of the chain corresponds to glutamate 31–arginine 52. A helical transmembrane segment spans residues valine 53 to leucine 77. The Lumenal segment spans residues cysteine 78 to glutamine 80. A helical transmembrane segment spans residues valine 81–leucine 102. At glycine 103 to glutamine 107 the chain is on the cytoplasmic side. The stretch at serine 108 to glycine 115 is an intramembrane region. The chain crosses the membrane as a helical span at residues lysine 116 to alanine 128. Topologically, residues glycine 129 to threonine 153 are lumenal.

The protein belongs to the MAPEG family. In terms of assembly, homotrimer. Interacts with LTC4S and ALOX5.

The protein resides in the nucleus membrane. Its subcellular location is the endoplasmic reticulum membrane. Functionally, required for leukotriene biosynthesis by ALOX5 (5-lipoxygenase). Anchors ALOX5 to the membrane. Binds arachidonic acid, and could play an essential role in the transfer of arachidonic acid to ALOX5. Binds to MK-886, a compound that blocks the biosynthesis of leukotrienes. The protein is Arachidonate 5-lipoxygenase-activating protein (ALOX5AP) of Ovis aries (Sheep).